Consider the following 301-residue polypeptide: MEINGVYIEDTFAEAFPIWVSRVLITAATKKWAKIAATEATGFGCSVIMCPAEAGIEKYVPPSKTPDGRPGFIIQICHPKKSELEHQMLERLGQCVLTCPTTAIFDAMGDMADEQLKVGFKLKFFGDGYEKKDELYGRKVYKIPIMGGEFITEAKFGIKKGVAGGNFFIMADTNASALIAAEAAVNAIASVDGVITPFPGGVVASGSKVGASNPKYKFMVATTNHKMCPTLKGVVEDSEIPEDVNGVYEIVIDGVDEESVKEAMKQGILAATRVKGVKKITAGNYGGKLGKYQFNLRELFE.

It belongs to the FTR family. As to quaternary structure, homotetramer.

The protein resides in the cytoplasm. The catalysed reaction is N-formylmethanofuran + 5,6,7,8-tetrahydromethanopterin + H(+) = N(5)-formyl-5,6,7,8-tetrahydromethanopterin + methanofuran. The protein operates within one-carbon metabolism; methanogenesis from CO(2); 5,10-methenyl-5,6,7,8-tetrahydromethanopterin from CO(2): step 2/3. Functionally, catalyzes the reversible transfer of a formyl group from formylmethanofuran (formyl-MFR) to tetrahydromethanopterin (H(4)MPT) to produce 5-formyl tetrahydromethanopterin (5-formyl-H(4)MPT) and methanofuran (MFR). This is Formylmethanofuran--tetrahydromethanopterin formyltransferase from Methanocaldococcus jannaschii (strain ATCC 43067 / DSM 2661 / JAL-1 / JCM 10045 / NBRC 100440) (Methanococcus jannaschii).